Consider the following 843-residue polypeptide: Excretory canal abnormal protein 6 (843 aa).

4 disordered regions span residues Q54–T135, T568–T601, T748–E767, and T773–V843. Pro residues-rich tracts occupy residues T66–L76 and A83–I103. In terms of domain architecture, FH2 spans F127–T512. Polar residues-rich tracts occupy residues P776 to H792 and I819 to R830.

This sequence belongs to the formin homology family. In terms of tissue distribution, expressed in the excretory cell and mostly accumulates at the tip of the excretory cell canals.

The protein localises to the cytoplasm. Its subcellular location is the cytoskeleton. Functionally, constitutively active protein required for microtubule and F-actin growth, structural maintenance and organization during excretory cell tubulogenesis. The chain is Excretory canal abnormal protein 6 from Caenorhabditis elegans.